Reading from the N-terminus, the 303-residue chain is UDP-3-O-acyl-N-acetylglucosamine deacetylase (303 aa).

3 residues coordinate Zn(2+): His-78, His-237, and Asp-241. The active-site Proton donor is the His-264.

The protein belongs to the LpxC family. Zn(2+) serves as cofactor.

It carries out the reaction a UDP-3-O-[(3R)-3-hydroxyacyl]-N-acetyl-alpha-D-glucosamine + H2O = a UDP-3-O-[(3R)-3-hydroxyacyl]-alpha-D-glucosamine + acetate. The protein operates within glycolipid biosynthesis; lipid IV(A) biosynthesis; lipid IV(A) from (3R)-3-hydroxytetradecanoyl-[acyl-carrier-protein] and UDP-N-acetyl-alpha-D-glucosamine: step 2/6. Functionally, catalyzes the hydrolysis of UDP-3-O-myristoyl-N-acetylglucosamine to form UDP-3-O-myristoylglucosamine and acetate, the committed step in lipid A biosynthesis. In Stenotrophomonas maltophilia (strain R551-3), this protein is UDP-3-O-acyl-N-acetylglucosamine deacetylase.